The following is a 262-amino-acid chain: Acyl-[acyl-carrier-protein]--UDP-N-acetylglucosamine O-acyltransferase (262 aa).

It belongs to the transferase hexapeptide repeat family. LpxA subfamily. Homotrimer.

It is found in the cytoplasm. It catalyses the reaction a (3R)-hydroxyacyl-[ACP] + UDP-N-acetyl-alpha-D-glucosamine = a UDP-3-O-[(3R)-3-hydroxyacyl]-N-acetyl-alpha-D-glucosamine + holo-[ACP]. Its pathway is glycolipid biosynthesis; lipid IV(A) biosynthesis; lipid IV(A) from (3R)-3-hydroxytetradecanoyl-[acyl-carrier-protein] and UDP-N-acetyl-alpha-D-glucosamine: step 1/6. Its function is as follows. Involved in the biosynthesis of lipid A, a phosphorylated glycolipid that anchors the lipopolysaccharide to the outer membrane of the cell. In Vibrio parahaemolyticus serotype O3:K6 (strain RIMD 2210633), this protein is Acyl-[acyl-carrier-protein]--UDP-N-acetylglucosamine O-acyltransferase.